A 345-amino-acid polypeptide reads, in one-letter code: Inositol 2-dehydrogenase (345 aa).

Belongs to the Gfo/Idh/MocA family. Homotetramer.

It carries out the reaction myo-inositol + NAD(+) = scyllo-inosose + NADH + H(+). Functionally, involved in the oxidation of myo-inositol (MI) to 2-keto-myo-inositol (2KMI or 2-inosose). This Mycolicibacterium smegmatis (strain ATCC 700084 / mc(2)155) (Mycobacterium smegmatis) protein is Inositol 2-dehydrogenase.